A 271-amino-acid polypeptide reads, in one-letter code: 4-hydroxy-tetrahydrodipicolinate reductase (271 aa).

10–15 (GAAGRM) serves as a coordination point for NAD(+). R37 is a binding site for NADP(+). Residues 100–102 (GTT) and 124–127 (SGNM) contribute to the NAD(+) site. Residue H157 is the Proton donor/acceptor of the active site. Position 158 (H158) interacts with (S)-2,3,4,5-tetrahydrodipicolinate. Catalysis depends on K161, which acts as the Proton donor. Position 167–168 (167–168 (GT)) interacts with (S)-2,3,4,5-tetrahydrodipicolinate. The interval 183–202 (SLSEHEQRGRDGHTGPRKDG) is disordered. Residues 185 to 202 (SEHEQRGRDGHTGPRKDG) show a composition bias toward basic and acidic residues.

The protein belongs to the DapB family.

It localises to the cytoplasm. The catalysed reaction is (S)-2,3,4,5-tetrahydrodipicolinate + NAD(+) + H2O = (2S,4S)-4-hydroxy-2,3,4,5-tetrahydrodipicolinate + NADH + H(+). It carries out the reaction (S)-2,3,4,5-tetrahydrodipicolinate + NADP(+) + H2O = (2S,4S)-4-hydroxy-2,3,4,5-tetrahydrodipicolinate + NADPH + H(+). The protein operates within amino-acid biosynthesis; L-lysine biosynthesis via DAP pathway; (S)-tetrahydrodipicolinate from L-aspartate: step 4/4. Its function is as follows. Catalyzes the conversion of 4-hydroxy-tetrahydrodipicolinate (HTPA) to tetrahydrodipicolinate. This Beijerinckia indica subsp. indica (strain ATCC 9039 / DSM 1715 / NCIMB 8712) protein is 4-hydroxy-tetrahydrodipicolinate reductase.